The sequence spans 518 residues: Probable G-protein coupled receptor Mth-like 2 (518 aa).

An N-terminal signal peptide occupies residues 1–26 (MIASSKMLLSASILIYFLLNLQSSSA). Over 27-220 (EIADCSFYDT…CLILPSRTGQ (194 aa)) the chain is Extracellular. 5 disulfide bridges follow: cysteine 31/cysteine 85, cysteine 87/cysteine 92, cysteine 96/cysteine 190, cysteine 97/cysteine 108, and cysteine 152/cysteine 211. N-linked (GlcNAc...) asparagine glycosylation is present at asparagine 47. N-linked (GlcNAc...) asparagine glycans are attached at residues asparagine 111, asparagine 125, and asparagine 201. A helical transmembrane segment spans residues 221 to 241 (TVVMITSLICLVLTIAVYLCV). The Cytoplasmic portion of the chain corresponds to 242 to 250 (KKLMNLEGK). The helical transmembrane segment at 251-271 (CFICYMMCLFFGYLFLLLDLW) threads the bilayer. Topologically, residues 272-279 (ELSLDFCK) are extracellular. A helical membrane pass occupies residues 280-300 (AAGFLGYFFVMAAFFWLSIIS). Over 301-321 (RHYWKCLTNPCASMNIRSERA) the chain is Cytoplasmic. A helical transmembrane segment spans residues 322–342 (FLLYSCFAWAMPLALTGVTYL). The Extracellular portion of the chain corresponds to 343 to 371 (ADNVVNNEEWQPRVGDEGHCWIYTKSWSA). Residues 372–392 (MVYFYGPMVLLILFNITMFVL) traverse the membrane as a helical segment. Topologically, residues 393 to 426 (TAKHIIDSKRTLRKIARNEGRIQKLNSDKQNYTQ) are cytoplasmic. A helical transmembrane segment spans residues 427–447 (FLLLFTVMGMSWSFEIFSYLV). The Extracellular segment spans residues 448–455 (QREKLWVN). The chain crosses the membrane as a helical span at residues 456 to 476 (IFLVADYFNWSQGVIIFVLFI). Over 477–518 (LRRKTLVLFKKQIFPKQRAFSRSATQSTIESISQTKRHFNMT) the chain is Cytoplasmic.

This sequence belongs to the G-protein coupled receptor 2 family. Mth subfamily.

The protein resides in the cell membrane. The protein is Probable G-protein coupled receptor Mth-like 2 (mthl2) of Drosophila melanogaster (Fruit fly).